A 238-amino-acid polypeptide reads, in one-letter code: 2-C-methyl-D-erythritol 4-phosphate cytidylyltransferase (238 aa).

Belongs to the IspD/TarI cytidylyltransferase family. IspD subfamily.

The enzyme catalyses 2-C-methyl-D-erythritol 4-phosphate + CTP + H(+) = 4-CDP-2-C-methyl-D-erythritol + diphosphate. Its pathway is isoprenoid biosynthesis; isopentenyl diphosphate biosynthesis via DXP pathway; isopentenyl diphosphate from 1-deoxy-D-xylulose 5-phosphate: step 2/6. Functionally, catalyzes the formation of 4-diphosphocytidyl-2-C-methyl-D-erythritol from CTP and 2-C-methyl-D-erythritol 4-phosphate (MEP). The polypeptide is 2-C-methyl-D-erythritol 4-phosphate cytidylyltransferase (Acinetobacter baumannii (strain SDF)).